Consider the following 561-residue polypeptide: Excitatory amino acid transporter 4 (561 aa).

Topologically, residues 1–52 (MSSHGNSLFLRESGAGGGCLQGLQDSLQQRALRTRLRLQTMTREHVRRFLRR) are cytoplasmic. Phosphoserine is present on serine 2. Helical transmembrane passes span 53–73 (NAFILLTVSAVIIGVSLAFAL), 96–116 (MLQMLVLPLIVSSLVTGMASL), and 130–150 (VYYMVTTVIAVFIGILMVTII). Residues asparagine 213, asparagine 229, and asparagine 236 are each glycosylated (N-linked (GlcNAc...) asparagine). The next 3 helical transmembrane spans lie at 259 to 282 (SANGINALGLVVFSVAFGLVIGGM), 292 to 319 (FFDSLNEAIMRLVGIIIWYAPVGILFLI), and 341 to 362 (LTVIVGLFLHAGGVLPLIYFLV). The segment at residues 368-398 (FPFIGGMLQALITAMGTSSSSATLPITFRCL) is an intramembrane region (discontinuously helical). 385 to 387 (SSS) contacts L-aspartate. The chain crosses the membrane as a helical span at residues 408–434 (ITRFVLPVGATVNMDGTALYEALAAIF). Na(+) contacts are provided by glycine 416, threonine 418, and asparagine 420. L-aspartate is bound by residues threonine 424, 465-469 (IPQAG), aspartate 498, and asparagine 505. Positions 448-481 (ITTISITATAASVGAAGIPQAGLVTMVIVLTSVG) form an intramembrane region, discontinuously helical. The helical transmembrane segment at 495–516 (WFLDRLRTMTNVLGDSIGAAVI) threads the bilayer. Na(+) is bound by residues asparagine 505 and aspartate 509.

The protein belongs to the dicarboxylate/amino acid:cation symporter (DAACS) (TC 2.A.23) family. SLC1A6 subfamily. As to quaternary structure, homotrimer. In terms of tissue distribution, brain specific.

The protein localises to the cell membrane. It catalyses the reaction K(+)(in) + L-glutamate(out) + 3 Na(+)(out) + H(+)(out) = K(+)(out) + L-glutamate(in) + 3 Na(+)(in) + H(+)(in). It carries out the reaction K(+)(in) + L-aspartate(out) + 3 Na(+)(out) + H(+)(out) = K(+)(out) + L-aspartate(in) + 3 Na(+)(in) + H(+)(in). The catalysed reaction is D-aspartate(out) + K(+)(in) + 3 Na(+)(out) + H(+)(out) = D-aspartate(in) + K(+)(out) + 3 Na(+)(in) + H(+)(in). Functionally, sodium-dependent, high-affinity amino acid transporter that mediates the uptake of L-glutamate and also L-aspartate and D-aspartate. Functions as a symporter that transports one amino acid molecule together with two or three Na(+) ions and one proton, in parallel with the counter-transport of one K(+) ion. Mediates Cl(-) flux that is not coupled to amino acid transport; this avoids the accumulation of negative charges due to aspartate and Na(+) symport. Plays a redundant role in the rapid removal of released glutamate from the synaptic cleft, which is essential for terminating the postsynaptic action of glutamate. The protein is Excitatory amino acid transporter 4 (Slc1a6) of Mus musculus (Mouse).